A 136-amino-acid chain; its full sequence is Ribonuclease P protein component (136 aa).

Belongs to the RnpA family. Consists of a catalytic RNA component (M1 or rnpB) and a protein subunit.

The enzyme catalyses Endonucleolytic cleavage of RNA, removing 5'-extranucleotides from tRNA precursor.. In terms of biological role, RNaseP catalyzes the removal of the 5'-leader sequence from pre-tRNA to produce the mature 5'-terminus. It can also cleave other RNA substrates such as 4.5S RNA. The protein component plays an auxiliary but essential role in vivo by binding to the 5'-leader sequence and broadening the substrate specificity of the ribozyme. This is Ribonuclease P protein component from Burkholderia pseudomallei (strain 1106a).